The chain runs to 173 residues: GTP-dependent dephospho-CoA kinase (173 aa).

The GTP site is built by Asp52, Val53, Val54, Asp71, Lys73, and Asp122.

Belongs to the GTP-dependent DPCK family.

It catalyses the reaction 3'-dephospho-CoA + GTP = GDP + CoA + H(+). The protein operates within cofactor biosynthesis; coenzyme A biosynthesis. In terms of biological role, catalyzes the GTP-dependent phosphorylation of the 3'-hydroxyl group of dephosphocoenzyme A to form coenzyme A (CoA). The chain is GTP-dependent dephospho-CoA kinase from Metallosphaera sedula (strain ATCC 51363 / DSM 5348 / JCM 9185 / NBRC 15509 / TH2).